Reading from the N-terminus, the 251-residue chain is DNA-directed RNA polymerase III subunit RPC7 (251 aa).

Residues 186–251 (DDASTGDGAA…EEDPNEEAAF (66 aa)) form a disordered region. S189 carries the phosphoserine modification. Composition is skewed to acidic residues over residues 203-225 (GEDD…DDDY) and 234-251 (GDDD…EAAF).

Belongs to the eukaryotic RPC7 RNA polymerase subunit family. Component of the RNA polymerase III (Pol III) complex consisting of 17 subunits.

The protein localises to the nucleus. DNA-dependent RNA polymerase catalyzes the transcription of DNA into RNA using the four ribonucleoside triphosphates as substrates. Specific peripheric component of RNA polymerase III which synthesizes small RNAs, such as 5S rRNA and tRNAs. C31 is involved in the formation of the initiation complex. The polypeptide is DNA-directed RNA polymerase III subunit RPC7 (RPC31) (Saccharomyces cerevisiae (strain ATCC 204508 / S288c) (Baker's yeast)).